Reading from the N-terminus, the 347-residue chain is NADH-ubiquinone oxidoreductase chain 2 (347 aa).

Helical transmembrane passes span proline 3–serine 23, histidine 25–methionine 45, tyrosine 59–methionine 79, valine 93–valine 115, asparagine 150–leucine 170, isoleucine 178–proline 198, leucine 200–alanine 220, methionine 240–phenylalanine 260, asparagine 274–methionine 294, and leucine 326–leucine 346.

The protein belongs to the complex I subunit 2 family. In terms of assembly, core subunit of respiratory chain NADH dehydrogenase (Complex I) which is composed of 45 different subunits. Interacts with TMEM242.

It localises to the mitochondrion inner membrane. The enzyme catalyses a ubiquinone + NADH + 5 H(+)(in) = a ubiquinol + NAD(+) + 4 H(+)(out). Functionally, core subunit of the mitochondrial membrane respiratory chain NADH dehydrogenase (Complex I) which catalyzes electron transfer from NADH through the respiratory chain, using ubiquinone as an electron acceptor. Essential for the catalytic activity and assembly of complex I. This chain is NADH-ubiquinone oxidoreductase chain 2, found in Mammuthus primigenius (Siberian woolly mammoth).